The sequence spans 288 residues: 2-dehydro-3-deoxyphosphooctonate aldolase (288 aa).

It belongs to the KdsA family.

The protein localises to the cytoplasm. The catalysed reaction is D-arabinose 5-phosphate + phosphoenolpyruvate + H2O = 3-deoxy-alpha-D-manno-2-octulosonate-8-phosphate + phosphate. It participates in carbohydrate biosynthesis; 3-deoxy-D-manno-octulosonate biosynthesis; 3-deoxy-D-manno-octulosonate from D-ribulose 5-phosphate: step 2/3. The protein operates within bacterial outer membrane biogenesis; lipopolysaccharide biosynthesis. This is 2-dehydro-3-deoxyphosphooctonate aldolase from Syntrophobacter fumaroxidans (strain DSM 10017 / MPOB).